A 262-amino-acid polypeptide reads, in one-letter code: MEDERSTQSYQGGEAAEQVEVTDRGLLGNLLGKKKAEEDKEKEEELVTGMEKVSVEEPEVKKEEHEDGEKKETLFSKLHRSSSSSSSSSDEEEEEVIDDNGEVIKRKKKKGLKEKLQGKLPGHKDTEGEHVTGLPAPAAPASVQTHGGHHDTDVVVEKIDGDVKTEAAPAVPEEEKKGFLEKIKEKLPGGHKKPEDAAAVPVTHAAPAPVHAPVPAPEEVSSPDAKEKKGLLGKIMDKLPGYHKTGEEDKAAAATGEHKPSA.

Disordered regions lie at residues 1-153 and 187-262; these read MEDE…HDTD and LPGG…KPSA. Basic and acidic residues-rich tracts occupy residues 34–45 and 53–74; these read KKAEEDKEKEEE and VSVE…KETL. Over residues 89–101 the composition is skewed to acidic residues; that stretch reads SDEEEEEVIDDNG. 2 consecutive repeat copies span residues 106-126 and 173-193. The 3 X 21 AA repeats, Lys-rich stretch occupies residues 106 to 245; it reads RKKKKGLKEK…MDKLPGYHKT (140 aa). Basic and acidic residues-rich tracts occupy residues 113–130 and 187–196; these read KEKL…EGEH and LPGGHKKPED. The span at 197–209 shows a compositional bias: low complexity; the sequence is AAAVPVTHAAPAP. Repeat 3 spans residues 225–245; it reads AKEKKGLLGKIMDKLPGYHKT. The segment covering 244-262 has biased composition (basic and acidic residues); the sequence is KTGEEDKAAAATGEHKPSA.

Expressed in roots, crown and leaves during cold acclimation.

This Triticum aestivum (Wheat) protein is Dehydrin COR410 (COR410).